The following is a 1838-amino-acid chain: Type III effector DspE (1838 aa).

The span at 1–12 (MELKSLGTEHKA) shows a compositional bias: basic and acidic residues. 6 disordered regions span residues 1-72 (MELK…AAHQ), 86-163 (KKFS…PTQQ), 182-264 (MAHP…VATP), 281-300 (LEGT…LKGS), 398-418 (DGKS…KTML), and 1480-1505 (NLAA…SNNR). Residues 27–46 (ALQQGSSSSSPQNAAASLAA) are compositionally biased toward low complexity. The span at 91 to 103 (SAPQGQPGTTHSK) shows a compositional bias: polar residues. Basic and acidic residues predominate over residues 110-120 (LLARDDGETQH). Polar residues predominate over residues 407-418 (GSGTQSHNKTML). The span at 1480–1502 (NLAAGSRERSTTSGQFGSTTSAS) shows a compositional bias: low complexity.

This sequence belongs to the AvrE family. Interacts with the chaperone DspF (DspB/F).

The protein localises to the secreted. It localises to the host cell. With respect to regulation, polyamidoamine dendrimers inhibit channel and virulence activities. In terms of biological role, major virulence factor that may function as a water- and solute-permeable channel dedicated to creating osmotic/water potential perturbation and a water- and nutrient-rich apoplast in which bacteria multiply within the infected plant tissues. Expression in Xenopus oocytes results in inward and outward currents, permeability to water and osmolarity-dependent oocyte swelling and bursting. Functionally, acts as a major cell-death inducer during fire blight, a necrotic disease affecting plants of the rosaceous family, and during hypersensitive response (HR) on non-host plants. Essential for pathogenicity on host plants. Contributes quantitatively and in a strain-dependent fashion to HR elicitation in non-host plants such as tobacco. Induces cell death in leaves of apple, a host plant, and tobacco, a non-host plant. Also triggers necrosis in the widely used model, non-host, N.benthamiana and in yeast. Required for the transient multiplication and survival of E.amylovora in non-host A.thaliana leaves. In A.thaliana, triggers electrolyte leakage, activation of defense pathways, reactive oxygen species (ROS) accumulation and cell death. The toxicity of DspE in A.thaliana is associated with an early repression of de novo protein synthesis. The polypeptide is Type III effector DspE (Erwinia amylovora (Fire blight bacteria)).